Here is a 246-residue protein sequence, read N- to C-terminus: MAAVDIRDNLLGISWVDSSWIPILNSGSVLDYFSERSNPFYDRTCNNEVVKMQRLTLEHLNQMVGIEYILLHAQEPILFIIRKQQRQSPAQVIPLADYYIIAGVIYQAPDLGSVINSRVLTAVHGIQSAFDEAMSYCRYHPSKGYWWHFKDHEEQDKVRPKAKRKEEPSSIFQRQRVDALLLDLRQKFPPKFVQLKPGEKPVPVDQTKKEAEPIPETVKPEEKETTKNVQQTVSAKGPPEKRMRLQ.

The tract at residues 193 to 246 (VQLKPGEKPVPVDQTKKEAEPIPETVKPEEKETTKNVQQTVSAKGPPEKRMRLQ) is disordered. The span at 206 to 226 (QTKKEAEPIPETVKPEEKETT) shows a compositional bias: basic and acidic residues. A Glycyl lysine isopeptide (Lys-Gly) (interchain with G-Cter in SUMO2) cross-link involves residue Lys-208. Lys-236 and Lys-241 each carry N6-acetyllysine.

This sequence belongs to the Mediator complex subunit 6 family. As to quaternary structure, component of the Mediator complex, which is composed of MED1, MED4, MED6, MED7, MED8, MED9, MED10, MED11, MED12, MED13, MED13L, MED14, MED15, MED16, MED17, MED18, MED19, MED20, MED21, MED22, MED23, MED24, MED25, MED26, MED27, MED29, MED30, MED31, CCNC, CDK8 and CDC2L6/CDK11. The MED12, MED13, CCNC and CDK8 subunits form a distinct module termed the CDK8 module. Mediator containing the CDK8 module is less active than Mediator lacking this module in supporting transcriptional activation. Individual preparations of the Mediator complex lacking one or more distinct subunits have been variously termed ARC, CRSP, DRIP, PC2, SMCC and TRAP. Interacts with CTNNB1 and GLI3.

The protein resides in the nucleus. In terms of biological role, component of the Mediator complex, a coactivator involved in the regulated transcription of nearly all RNA polymerase II-dependent genes. Mediator functions as a bridge to convey information from gene-specific regulatory proteins to the basal RNA polymerase II transcription machinery. Mediator is recruited to promoters by direct interactions with regulatory proteins and serves as a scaffold for the assembly of a functional preinitiation complex with RNA polymerase II and the general transcription factors. This is Mediator of RNA polymerase II transcription subunit 6 (MED6) from Homo sapiens (Human).